A 317-amino-acid chain; its full sequence is Ferrochelatase (317 aa).

Histidine 192 and glutamate 271 together coordinate Fe cation.

This sequence belongs to the ferrochelatase family.

Its subcellular location is the cytoplasm. The enzyme catalyses heme b + 2 H(+) = protoporphyrin IX + Fe(2+). It functions in the pathway porphyrin-containing compound metabolism; protoheme biosynthesis; protoheme from protoporphyrin-IX: step 1/1. Catalyzes the ferrous insertion into protoporphyrin IX. In Geobacter sp. (strain M21), this protein is Ferrochelatase.